We begin with the raw amino-acid sequence, 223 residues long: Imidazoleglycerol-phosphate dehydratase (223 aa).

The protein belongs to the imidazoleglycerol-phosphate dehydratase family.

The catalysed reaction is D-erythro-1-(imidazol-4-yl)glycerol 3-phosphate = 3-(imidazol-4-yl)-2-oxopropyl phosphate + H2O. Its pathway is amino-acid biosynthesis; L-histidine biosynthesis; L-histidine from 5-phospho-alpha-D-ribose 1-diphosphate: step 6/9. This Torulaspora delbrueckii (Yeast) protein is Imidazoleglycerol-phosphate dehydratase (HIS3).